Reading from the N-terminus, the 305-residue chain is Olfactory receptor 9G19 (305 aa).

At 1–24 the chain is on the extracellular side; it reads MDQNNNTVSEFIMLGFTTDPVIQK. The chain crosses the membrane as a helical span at residues 25–45; that stretch reads VLFAVFLVVYTLTLMGNSSLI. Topologically, residues 46 to 55 are cytoplasmic; that stretch reads MLICNDSRLH. The helical transmembrane segment at 56–76 threads the bilayer; it reads TPMYFFIGNLSFLDLGLSSVY. At 77–96 the chain is on the extracellular side; it reads TPKILETCISEDKSISFAGC. An intrachain disulfide couples cysteine 96 to cysteine 178. The chain crosses the membrane as a helical span at residues 97–117; it reads VAQFFFSAALDYTECYLLAAM. Over 118 to 138 the chain is Cytoplasmic; the sequence is AYDRYVAISKPLLYSQAMSLK. A helical membrane pass occupies residues 139–159; the sequence is LCVCFVVASYVGGFINSVIIT. Residues 160-204 lie on the Extracellular side of the membrane; the sequence is KDTFALTFCNDNVIDDFFCDIPPLVKLACGKKKSFQSVLFFLLTS. The helical transmembrane segment at 205–225 threads the bilayer; sequence NVIIPIVFILATYLFIIATIL. At 226–236 the chain is on the cytoplasmic side; that stretch reads RIRSTQGRLKA. A helical transmembrane segment spans residues 237-257; the sequence is FSTCSSHLISVTLYYGSILYI. Residues 258–270 lie on the Extracellular side of the membrane; it reads YARPRSSYSLDRD. A helical membrane pass occupies residues 271-291; that stretch reads KIVSTFYTVVFPMLNPLIYSL. At 292–305 the chain is on the cytoplasmic side; sequence RNKDVKEALNKLLK.

It belongs to the G-protein coupled receptor 1 family.

Its subcellular location is the cell membrane. In terms of biological role, odorant receptor. The polypeptide is Olfactory receptor 9G19 (Mus musculus (Mouse)).